A 154-amino-acid polypeptide reads, in one-letter code: Lipoprotein signal peptidase (154 aa).

Helical transmembrane passes span 8-28 (AFFL…YWAL), 36-56 (IVVN…AFSF), 66-86 (WLFA…LLTK), and 88-108 (HHWL…GNLY). Residues Asp118 and Asp136 contribute to the active site. A helical transmembrane segment spans residues 129–149 (WPVFNLADVAITLGVILMLIA).

The protein belongs to the peptidase A8 family.

It localises to the cell inner membrane. It catalyses the reaction Release of signal peptides from bacterial membrane prolipoproteins. Hydrolyzes -Xaa-Yaa-Zaa-|-(S,diacylglyceryl)Cys-, in which Xaa is hydrophobic (preferably Leu), and Yaa (Ala or Ser) and Zaa (Gly or Ala) have small, neutral side chains.. It participates in protein modification; lipoprotein biosynthesis (signal peptide cleavage). Its function is as follows. This protein specifically catalyzes the removal of signal peptides from prolipoproteins. The sequence is that of Lipoprotein signal peptidase from Dichelobacter nodosus (strain VCS1703A).